The chain runs to 454 residues: Mitochondrial dynamics protein MID49 (454 aa).

Topologically, residues 1–22 (MAEFSQKQRKQSGSEGLGSVVD) are mitochondrial intermembrane. A helical membrane pass occupies residues 23–43 (FLLANARLVLGVGGAAVLGIA). The Cytoplasmic segment spans residues 44–454 (TLAVKRLIDR…SGLQVPESLF (411 aa)). A disordered region spans residues 76–113 (ATSPQKPQPPPAAFSQPLATGSPSPSVPVEPTPIHSPT).

This sequence belongs to the MID49/MID51 family. As to quaternary structure, interacts with DNM1L.

Its subcellular location is the mitochondrion outer membrane. In terms of biological role, mitochondrial outer membrane protein which regulates mitochondrial organization. It is required for mitochondrial fission and promotes the recruitment and association of the fission mediator dynamin-related protein 1 (DNM1L) to the mitochondrial surface independently of the mitochondrial fission FIS1 and MFF proteins. Regulates DNM1L GTPase activity. The sequence is that of Mitochondrial dynamics protein MID49 (Mief2) from Mus musculus (Mouse).